We begin with the raw amino-acid sequence, 132 residues long: MGNDTITNLITSIRNADMVEKGTVRVTATNITKNIGRILLREGFIEDVREHQEGQKYFLISTSKYRRRKKRTYMTTSKRTSKPGLRIYSNYREIPKVLGGMGIVILSTSQGILTDREARQKKIGGEILCYVW.

Belongs to the universal ribosomal protein uS8 family. Part of the 30S ribosomal subunit.

The protein resides in the plastid. The protein localises to the chloroplast. Functionally, one of the primary rRNA binding proteins, it binds directly to 16S rRNA central domain where it helps coordinate assembly of the platform of the 30S subunit. This Pinus thunbergii (Japanese black pine) protein is Small ribosomal subunit protein uS8c (rps8).